Reading from the N-terminus, the 624-residue chain is Fibronectin type III domain-containing protein 2 (624 aa).

A signal peptide spans 1–19 (MREQFSVLVISLLFSSSYG). Fibronectin type-III domains follow at residues 131–236 (PPQN…TPDI), 240–330 (EPTN…TDVF), 334–430 (MPRF…TVPT), 431–524 (VPRE…PKRD), and 527–624 (VPPN…WPGR).

As to expression, prismatic layer of shell (at protein level).

It localises to the secreted. The protein is Fibronectin type III domain-containing protein 2 of Margaritifera margaritifera (Freshwater pearl mussel).